We begin with the raw amino-acid sequence, 448 residues long: Probable malate:quinone oxidoreductase (448 aa).

The protein belongs to the MQO family. FAD serves as cofactor.

It catalyses the reaction (S)-malate + a quinone = a quinol + oxaloacetate. The protein operates within carbohydrate metabolism; tricarboxylic acid cycle; oxaloacetate from (S)-malate (quinone route): step 1/1. In terms of biological role, catalyzes oxidation of malate to oxaloacetate in the citric acid cycle. Donates electrons to quinones of the electron transfer chain. This chain is Probable malate:quinone oxidoreductase (mqo), found in Campylobacter jejuni subsp. jejuni serotype O:2 (strain ATCC 700819 / NCTC 11168).